A 339-amino-acid chain; its full sequence is Probable N5-carboxyaminoimidazole ribonucleotide mutase (339 aa).

Substrate contacts are provided by Ser11, Asp14, and Arg41.

It belongs to the AIR carboxylase family. Class I subfamily.

It carries out the reaction 5-carboxyamino-1-(5-phospho-D-ribosyl)imidazole + H(+) = 5-amino-1-(5-phospho-D-ribosyl)imidazole-4-carboxylate. It functions in the pathway purine metabolism; IMP biosynthesis via de novo pathway; 5-amino-1-(5-phospho-D-ribosyl)imidazole-4-carboxylate from 5-amino-1-(5-phospho-D-ribosyl)imidazole (N5-CAIR route): step 2/2. In terms of biological role, catalyzes the conversion of N5-carboxyaminoimidazole ribonucleotide (N5-CAIR) to 4-carboxy-5-aminoimidazole ribonucleotide (CAIR). This Methanobrevibacter smithii protein is Probable N5-carboxyaminoimidazole ribonucleotide mutase.